The sequence spans 70 residues: MLYPSIDNLLEKLDSKYSLVTVSARRAREMKEDSARVPLVEKPKSYKFVGIALEEIVNDQLTKRVPKEEQ.

It belongs to the RNA polymerase subunit omega family. In terms of assembly, the RNAP catalytic core consists of 2 alpha, 1 beta, 1 beta' and 1 omega subunit. When a sigma factor is associated with the core the holoenzyme is formed, which can initiate transcription.

It catalyses the reaction RNA(n) + a ribonucleoside 5'-triphosphate = RNA(n+1) + diphosphate. Functionally, promotes RNA polymerase assembly. Latches the N- and C-terminal regions of the beta' subunit thereby facilitating its interaction with the beta and alpha subunits. The polypeptide is DNA-directed RNA polymerase subunit omega (Shouchella clausii (strain KSM-K16) (Alkalihalobacillus clausii)).